The chain runs to 716 residues: MFNVTKKSIEWGGETLTLETGKVARQADGSVIATLGETSVMANVTFAKAAKPGQDFFPLTVHYQERYYAAGKVPGGFFKREARPSEKETLTSRLIDRPIRPLFVDGFKNEVLLIVTVLSHDLVNEPDIVAMIAASAALTISGVPFMGPIGAARVGFAGGEYVLNPDVDDMQKLRENPEQRLDLVIAGTKDAVMMVESEAYELSEAEMLGAVKFGHEAMQPVIDMIIDFAEEAAHEPFDFSPPDYAALYAKVKSLGEAQMRAAFAIREKQDRVNAIDAARAAIKAQLSEAELADENLGTAFKKLESSILRGDIINGGARIDGRDTKTVRPIISETSVLPRTHGSALFTRGETQALVVTTLGTGEDEQIIDALHGNSRSNFLLHYNFPPYSVGEVGRFGPPGRREIGHGKLAWRALQAVLPAATDFPYTIRVVSEITESNGSSSMASVCGGSLSMMDAGVPLKAPVAGVAMGLILEDDGKWAVLTDILGDEDHLGDMDFKVAGTENGITSLQMDIKVAGITPEIMEQALAQAKDGRMHILGEMSKALSSANSFSAYAPKIETLTIPTDKIREVIGSGGKVIREIVETSGAKVDINDDGVIKIASNDQAAIKKAYDMIWSIVAEPEEGQIYTGKVVKLVDFGAFVNFFGKRDGLVHVSQIANKRLTHPNEVLKEGQEVKVKLLGFDERGKVRLGMKMVDQETGQEIQPEKKEREEAGEA.

Residues D490 and D496 each coordinate Mg(2+). The 60-residue stretch at 556–615 folds into the KH domain; sequence PKIETLTIPTDKIREVIGSGGKVIREIVETSGAKVDINDDGVIKIASNDQAAIKKAYDMI. In terms of domain architecture, S1 motif spans 625–693; the sequence is GQIYTGKVVK…ERGKVRLGMK (69 aa). A disordered region spans residues 695–716; that stretch reads VDQETGQEIQPEKKEREEAGEA. The segment covering 704–716 has biased composition (basic and acidic residues); sequence QPEKKEREEAGEA.

This sequence belongs to the polyribonucleotide nucleotidyltransferase family. Mg(2+) is required as a cofactor.

The protein localises to the cytoplasm. The enzyme catalyses RNA(n+1) + phosphate = RNA(n) + a ribonucleoside 5'-diphosphate. Its function is as follows. Involved in mRNA degradation. Catalyzes the phosphorolysis of single-stranded polyribonucleotides processively in the 3'- to 5'-direction. The protein is Polyribonucleotide nucleotidyltransferase of Cereibacter sphaeroides (strain KD131 / KCTC 12085) (Rhodobacter sphaeroides).